The sequence spans 545 residues: Tyrosine decarboxylase 2 (545 aa).

The span at 23-44 (GYTNGNGHTNGNGNYNGNGHVN) shows a compositional bias: gly residues. A disordered region spans residues 23–45 (GYTNGNGHTNGNGNYNGNGHVNG). H245 and H360 together coordinate L-tyrosine. The residue at position 361 (K361) is an N6-(pyridoxal phosphate)lysine. Y390 lines the L-tyrosine pocket.

The protein belongs to the group II decarboxylase family. In terms of assembly, homotetramer. Pyridoxal 5'-phosphate is required as a cofactor. As to expression, expressed specifically in flowers.

It is found in the cytoplasm. The enzyme catalyses L-tyrosine + H(+) = tyramine + CO2. Functionally, converts tyrosine into tyramine, a precursor of isoquinoline alkaloids and various amides. This chain is Tyrosine decarboxylase 2, found in Arabidopsis thaliana (Mouse-ear cress).